The primary structure comprises 702 residues: Methionine--tRNA ligase (702 aa).

The short motif at Pro-14–His-24 is the 'HIGH' region element. 4 residues coordinate Zn(2+): Cys-146, Cys-149, Cys-159, and Cys-162. The 'KMSKS' region signature appears at Lys-344–Ser-348. An ATP-binding site is contributed by Lys-347. Residues Asp-601–Gln-702 form the tRNA-binding domain.

The protein belongs to the class-I aminoacyl-tRNA synthetase family. MetG type 1 subfamily. As to quaternary structure, homodimer. The cofactor is Zn(2+).

The protein localises to the cytoplasm. It catalyses the reaction tRNA(Met) + L-methionine + ATP = L-methionyl-tRNA(Met) + AMP + diphosphate. Its function is as follows. Is required not only for elongation of protein synthesis but also for the initiation of all mRNA translation through initiator tRNA(fMet) aminoacylation. The polypeptide is Methionine--tRNA ligase (Chlorobium phaeovibrioides (strain DSM 265 / 1930) (Prosthecochloris vibrioformis (strain DSM 265))).